A 254-amino-acid polypeptide reads, in one-letter code: CRISPR-associated endonuclease Cas1 (254 aa).

Mn(2+) contacts are provided by Glu-78, His-146, and Glu-161.

This sequence belongs to the CRISPR-associated endonuclease Cas1 family. Homodimer, forms a heterotetramer with a Cas2 homodimer. Mg(2+) serves as cofactor. Requires Mn(2+) as cofactor.

In terms of biological role, CRISPR (clustered regularly interspaced short palindromic repeat), is an adaptive immune system that provides protection against mobile genetic elements (viruses, transposable elements and conjugative plasmids). CRISPR clusters contain spacers, sequences complementary to antecedent mobile elements, and target invading nucleic acids. CRISPR clusters are transcribed and processed into CRISPR RNA (crRNA). Acts as a dsDNA endonuclease. Involved in the integration of spacer DNA into the CRISPR cassette. In Leptospira interrogans serogroup Icterohaemorrhagiae serovar Lai (strain 56601), this protein is CRISPR-associated endonuclease Cas1.